Here is a 286-residue protein sequence, read N- to C-terminus: Centromere protein P (286 aa).

Residues 1-73 are a coiled coil; the sequence is MDSETRELRA…RSEHSFLSKL (73 aa). Serine 38 bears the Phosphoserine mark.

This sequence belongs to the CENP-P/CTF19 family. Component of the CENPA-CAD complex, composed of CENPI, CENPK, CENPL, CENPO, CENPP, CENPQ, CENPR and CENPS. The CENPA-CAD complex interacts with the CENPA-NAC complex, at least composed of CENPA, CENPC, CENPH, CENPM, CENPN, CENPT and CENPU.

It localises to the nucleus. Its subcellular location is the chromosome. The protein localises to the centromere. Its function is as follows. Component of the CENPA-CAD (nucleosome distal) complex, a complex recruited to centromeres which is involved in assembly of kinetochore proteins, mitotic progression and chromosome segregation. May be involved in incorporation of newly synthesized CENPA into centromeres via its interaction with the CENPA-NAC complex. This chain is Centromere protein P (Cenpp), found in Mus musculus (Mouse).